Reading from the N-terminus, the 184-residue chain is Large ribosomal subunit protein bL9 (184 aa).

A disordered region spans residues 160–184 (LQNQKSEQQEAEQDANKEAADGDDS). The segment covering 173 to 184 (DANKEAADGDDS) has biased composition (basic and acidic residues).

The protein belongs to the bacterial ribosomal protein bL9 family.

Its function is as follows. Binds to the 23S rRNA. This Wolbachia sp. subsp. Drosophila simulans (strain wRi) protein is Large ribosomal subunit protein bL9.